Reading from the N-terminus, the 221-residue chain is GTP cyclohydrolase 1 (221 aa).

Zn(2+)-binding residues include Cys111, His114, and Cys182.

The protein belongs to the GTP cyclohydrolase I family. As to quaternary structure, homomer.

It catalyses the reaction GTP + H2O = 7,8-dihydroneopterin 3'-triphosphate + formate + H(+). The protein operates within cofactor biosynthesis; 7,8-dihydroneopterin triphosphate biosynthesis; 7,8-dihydroneopterin triphosphate from GTP: step 1/1. The chain is GTP cyclohydrolase 1 from Erwinia tasmaniensis (strain DSM 17950 / CFBP 7177 / CIP 109463 / NCPPB 4357 / Et1/99).